The following is a 490-amino-acid chain: Glutamyl-tRNA(Gln) amidotransferase subunit A (490 aa).

Active-site charge relay system residues include K78 and S159. S183 (acyl-ester intermediate) is an active-site residue.

This sequence belongs to the amidase family. GatA subfamily. In terms of assembly, heterotrimer of A, B and C subunits.

It catalyses the reaction L-glutamyl-tRNA(Gln) + L-glutamine + ATP + H2O = L-glutaminyl-tRNA(Gln) + L-glutamate + ADP + phosphate + H(+). Functionally, allows the formation of correctly charged Gln-tRNA(Gln) through the transamidation of misacylated Glu-tRNA(Gln) in organisms which lack glutaminyl-tRNA synthetase. The reaction takes place in the presence of glutamine and ATP through an activated gamma-phospho-Glu-tRNA(Gln). The sequence is that of Glutamyl-tRNA(Gln) amidotransferase subunit A from Paramagnetospirillum magneticum (strain ATCC 700264 / AMB-1) (Magnetospirillum magneticum).